The primary structure comprises 194 residues: Probable DNA-directed RNA polymerase subunit delta (194 aa).

Residues 14 to 83 (LSMIEVARAI…GENKWGLRSW (70 aa)) enclose the HTH HARE-type domain. Positions 117–194 (GDEDAIDYSD…SDDEEDEEGE (78 aa)) are disordered.

Belongs to the RpoE family. In terms of assembly, RNAP is composed of a core of 2 alpha, a beta and a beta' subunits. The core is associated with a delta subunit and one of several sigma factors.

Its function is as follows. Participates in both the initiation and recycling phases of transcription. In the presence of the delta subunit, RNAP displays an increased specificity of transcription, a decreased affinity for nucleic acids, and an increased efficiency of RNA synthesis because of enhanced recycling. The protein is Probable DNA-directed RNA polymerase subunit delta of Streptococcus mutans serotype c (strain ATCC 700610 / UA159).